We begin with the raw amino-acid sequence, 321 residues long: Ribose-phosphate pyrophosphokinase 2 (321 aa).

Mg(2+) contacts are provided by D130, H132, and D145. A Phosphoserine modification is found at S172.

The protein belongs to the ribose-phosphate pyrophosphokinase family.

The protein localises to the cytoplasm. It catalyses the reaction D-ribose 5-phosphate + ATP = 5-phospho-alpha-D-ribose 1-diphosphate + AMP + H(+). It functions in the pathway metabolic intermediate biosynthesis; 5-phospho-alpha-D-ribose 1-diphosphate biosynthesis; 5-phospho-alpha-D-ribose 1-diphosphate from D-ribose 5-phosphate (route I): step 1/1. 5-phosphoribose 1-diphosphate synthase involved in nucleotide, histidine, and tryptophan biosynthesis. Active in heteromultimeric complexes with other 5-phosphoribose 1-diphosphate synthases. In Schizosaccharomyces pombe (strain 972 / ATCC 24843) (Fission yeast), this protein is Ribose-phosphate pyrophosphokinase 2.